A 546-amino-acid polypeptide reads, in one-letter code: MPQSTDLPAWRTLSEHFKTIAPRHMRDMFADDPGRFEAFSVRLGDLLFDYSKNRITRETVATLIQLAEEAGLREKIDAMFRGERLNVTENRAVLHVALRNRSNRPIRVDGKDVMPEVNRVLDRMRRFSQSVRTGEWRGATGKAITDVVNIGIGGSDLGPKMVVKALQPYADPRLRAHFVSNVDESDLVEILRPLNPETTLFVVASKTFTTQETMTNGRSARAWFLERISDESAIARHFVAISTNRNKVAEFGIDPRNMFEFWDWVGGRYSLWSAIGLPIALSVGMDRFEELLEGAHFVDEHFRTAPFERNIPVLMGLLGIWYINFFGAQSHAVLPYDQYLEDLPAHLQQADMESNGKTVDVEGRPVNYSTGPVIFGQPGTNGQHAFYQLLHQGSMLVPCDFLAAAESHHPLAEHHDILISNFLAQTEALMRGRTTDEARQEIASEELPPERLEALAAAKTFPGNKPTNSFLYRRLDPHTLGMLIALYEHKIFTQGVIWYINSFDQMGVELGKQLAKTILAELPGDAPVASHDASTNGLIRYFKSLR.

The Proton donor role is filled by Glu353. Active-site residues include His384 and Lys512.

This sequence belongs to the GPI family.

It is found in the cytoplasm. It catalyses the reaction alpha-D-glucose 6-phosphate = beta-D-fructose 6-phosphate. Its pathway is carbohydrate biosynthesis; gluconeogenesis. It functions in the pathway carbohydrate degradation; glycolysis; D-glyceraldehyde 3-phosphate and glycerone phosphate from D-glucose: step 2/4. In terms of biological role, catalyzes the reversible isomerization of glucose-6-phosphate to fructose-6-phosphate. This chain is Glucose-6-phosphate isomerase, found in Methylococcus capsulatus (strain ATCC 33009 / NCIMB 11132 / Bath).